A 385-amino-acid chain; its full sequence is 4-hydroxy-3-methylbut-2-en-1-yl diphosphate synthase (flavodoxin) 1 (385 aa).

[4Fe-4S] cluster-binding residues include Cys280, Cys283, Cys315, and Glu322.

The protein belongs to the IspG family. The cofactor is [4Fe-4S] cluster.

It catalyses the reaction (2E)-4-hydroxy-3-methylbut-2-enyl diphosphate + oxidized [flavodoxin] + H2O + 2 H(+) = 2-C-methyl-D-erythritol 2,4-cyclic diphosphate + reduced [flavodoxin]. The protein operates within isoprenoid biosynthesis; isopentenyl diphosphate biosynthesis via DXP pathway; isopentenyl diphosphate from 1-deoxy-D-xylulose 5-phosphate: step 5/6. Functionally, converts 2C-methyl-D-erythritol 2,4-cyclodiphosphate (ME-2,4cPP) into 1-hydroxy-2-methyl-2-(E)-butenyl 4-diphosphate. This is 4-hydroxy-3-methylbut-2-en-1-yl diphosphate synthase (flavodoxin) 1 from Streptomyces avermitilis (strain ATCC 31267 / DSM 46492 / JCM 5070 / NBRC 14893 / NCIMB 12804 / NRRL 8165 / MA-4680).